Reading from the N-terminus, the 464-residue chain is Argininosuccinate lyase (464 aa).

This sequence belongs to the lyase 1 family. Argininosuccinate lyase subfamily.

It localises to the cytoplasm. The enzyme catalyses 2-(N(omega)-L-arginino)succinate = fumarate + L-arginine. Its pathway is amino-acid biosynthesis; L-arginine biosynthesis; L-arginine from L-ornithine and carbamoyl phosphate: step 3/3. The polypeptide is Argininosuccinate lyase (Moorella thermoacetica (strain ATCC 39073 / JCM 9320)).